A 32-amino-acid chain; its full sequence is Potassium channel toxin alpha-KTx 10.6 (32 aa).

3 cysteine pairs are disulfide-bonded: cysteine 3-cysteine 22, cysteine 8-cysteine 27, and cysteine 12-cysteine 29.

Expressed by the venom gland.

The protein resides in the secreted. In terms of biological role, blocks human voltage-gated potassium (Kv) channels Kv1.2/KCNA2 and Kv1.3/KCNA3. Does not block human Kv1.1 at 100nM concentration. This chain is Potassium channel toxin alpha-KTx 10.6, found in Centruroides bonito (Scorpion).